A 251-amino-acid polypeptide reads, in one-letter code: Imidazole glycerol phosphate synthase subunit HisF (251 aa).

Active-site residues include Asp11 and Asp130.

The protein belongs to the HisA/HisF family. In terms of assembly, heterodimer of HisH and HisF.

The protein localises to the cytoplasm. It carries out the reaction 5-[(5-phospho-1-deoxy-D-ribulos-1-ylimino)methylamino]-1-(5-phospho-beta-D-ribosyl)imidazole-4-carboxamide + L-glutamine = D-erythro-1-(imidazol-4-yl)glycerol 3-phosphate + 5-amino-1-(5-phospho-beta-D-ribosyl)imidazole-4-carboxamide + L-glutamate + H(+). The protein operates within amino-acid biosynthesis; L-histidine biosynthesis; L-histidine from 5-phospho-alpha-D-ribose 1-diphosphate: step 5/9. In terms of biological role, IGPS catalyzes the conversion of PRFAR and glutamine to IGP, AICAR and glutamate. The HisF subunit catalyzes the cyclization activity that produces IGP and AICAR from PRFAR using the ammonia provided by the HisH subunit. The polypeptide is Imidazole glycerol phosphate synthase subunit HisF (Streptococcus mutans serotype c (strain ATCC 700610 / UA159)).